The primary structure comprises 442 residues: UDP-N-acetylmuramate--L-alanine ligase (442 aa).

109 to 115 (GAHGKTS) lines the ATP pocket.

It belongs to the MurCDEF family.

The protein localises to the cytoplasm. It catalyses the reaction UDP-N-acetyl-alpha-D-muramate + L-alanine + ATP = UDP-N-acetyl-alpha-D-muramoyl-L-alanine + ADP + phosphate + H(+). Its pathway is cell wall biogenesis; peptidoglycan biosynthesis. In terms of biological role, cell wall formation. In Streptococcus pyogenes serotype M18 (strain MGAS8232), this protein is UDP-N-acetylmuramate--L-alanine ligase.